Consider the following 148-residue polypeptide: Putative pre-16S rRNA nuclease (148 aa).

Belongs to the YqgF nuclease family.

The protein resides in the cytoplasm. Functionally, could be a nuclease involved in processing of the 5'-end of pre-16S rRNA. This Colwellia psychrerythraea (strain 34H / ATCC BAA-681) (Vibrio psychroerythus) protein is Putative pre-16S rRNA nuclease.